The chain runs to 172 residues: Disulfide bond formation protein B (172 aa).

The Cytoplasmic portion of the chain corresponds to 1-11 (MNPFRWSFRAQ). A helical membrane pass occupies residues 12 to 28 (FLLGFLACAGLLAYAIY). The Periplasmic portion of the chain corresponds to 29 to 46 (VQLHLGLEPCPLCIFQRI). Cys38 and Cys41 form a disulfide bridge. The helical transmembrane segment at 47 to 63 (AFAALAVFFLLGALHGP) threads the bilayer. Over 64–70 (RAAAGRK) the chain is Cytoplasmic. Residues 71 to 88 (VYGVLSFIAAGVGMGIAA) traverse the membrane as a helical segment. Residues 89 to 145 (RHVWVQIRPKDMMSSCGPPLSFLSETMGPFEVFRTVLTGTGDCGNIDWRFLGLSMPM) lie on the Periplasmic side of the membrane. A disulfide bridge links Cys104 with Cys131. Residues 146–164 (WSMVWFVGLALWALYAGFK) form a helical membrane-spanning segment. At 165-172 (VRRSSVHH) the chain is on the cytoplasmic side.

The protein belongs to the DsbB family.

It localises to the cell inner membrane. Its function is as follows. Required for disulfide bond formation in some periplasmic proteins. Acts by oxidizing the DsbA protein. The sequence is that of Disulfide bond formation protein B from Xanthomonas axonopodis pv. citri (strain 306).